A 100-amino-acid polypeptide reads, in one-letter code: Urease subunit gamma (100 aa).

It belongs to the urease gamma subunit family. In terms of assembly, heterotrimer of UreA (gamma), UreB (beta) and UreC (alpha) subunits. Three heterotrimers associate to form the active enzyme.

It localises to the cytoplasm. It catalyses the reaction urea + 2 H2O + H(+) = hydrogencarbonate + 2 NH4(+). It functions in the pathway nitrogen metabolism; urea degradation; CO(2) and NH(3) from urea (urease route): step 1/1. The protein is Urease subunit gamma of Paenarthrobacter aurescens (strain TC1).